The following is a 419-amino-acid chain: eIF5-mimic protein 2-A (419 aa).

Residues 1-15 (MNNQKQQKPTLTGQR) show a composition bias toward polar residues. Residues 1–29 (MNNQKQQKPTLTGQRFKTRKRDEKERFDP) are disordered. The W2 domain occupies 247–414 (NQQSIGARKE…KNAEEESESE (168 aa)).

Belongs to the BZW family.

Functionally, translation initiation regulator which may repress repeat-associated non-AUG (RAN) initiated translation probably by acting as a competitive inhibitor of eukaryotic translation initiation factor 5 (EIF5) function. Enhances histone H4 gene transcription but does not seem to bind DNA directly. In Danio rerio (Zebrafish), this protein is eIF5-mimic protein 2-A (bzw1a).